Reading from the N-terminus, the 322-residue chain is Follistatin-A (322 aa).

Residues 1-32 form the signal peptide; that stretch reads MLRMLKRQQLHPGMILLLFWLCYLIEDQKVQA. The region spanning 33–106 is the TB domain; the sequence is GNCWLQQGKN…TCDNVDCGPG (74 aa). 8 cysteine pairs are disulfide-bonded: Cys-35-Cys-58, Cys-45-Cys-91, Cys-59-Cys-94, Cys-98-Cys-109, Cys-103-Cys-119, Cys-121-Cys-153, Cys-125-Cys-146, and Cys-135-Cys-167. Asn-75 carries N-linked (GlcNAc...) asparagine glycosylation. Residues 97 to 120 enclose the Follistatin-like 1 domain; sequence TCDNVDCGPGKRCKMNRRSKPRCV. Kazal-like domains are found at residues 103–169, 189–244, and 267–321; these read CGPG…KCKK, NAYC…KCIK, and RGRC…SCNC. An N-linked (GlcNAc...) asparagine glycan is attached at Asn-127. Residues 170-193 form the Follistatin-like 2 domain; that stretch reads TCRDVLCPGSSTCVVDQTNNAYCV. 3 disulfide bridges follow: Cys-195-Cys-228, Cys-199-Cys-221, and Cys-210-Cys-242. The region spanning 247–271 is the Follistatin-like 3 domain; sequence SCDDIHCSAGKKCLWDAKMSRGRCA. Intrachain disulfides connect Cys-273/Cys-305, Cys-277/Cys-298, and Cys-287/Cys-319. N-linked (GlcNAc...) asparagine glycosylation is present at Asn-291.

Monomer. In terms of tissue distribution, not expressed in the organizer region. Expression in gastrulating embryos is confined to anterior and paraxial regions, which give rise to head mesoderm and the first five somites. In addition, expressed transiently in a subset of cells in the posterior notochord anlage. Later, expression is seen in brain, eyes and somites.

Its function is as follows. Binds directly to activin and functions as an activin antagonist. Specific inhibitor of the biosynthesis and secretion of pituitary follicle stimulating hormone (fsh). Inhibits bmp-signaling during later stages of development including late phases of dorsoventral patterning, to refine the early pattern set up by the interaction of chordino and bmp2/4. Not involved in organizer function or early phases of dorsoventral pattern formation. The sequence is that of Follistatin-A (fsta) from Danio rerio (Zebrafish).